The primary structure comprises 310 residues: Malate dehydrogenase (310 aa).

NAD(+) contacts are provided by residues 7–12 and Asp32; that span reads GAGNVG. Residues Arg81 and Arg87 each coordinate substrate. NAD(+) is bound by residues Asn94 and 117 to 119; that span reads VSN. Substrate contacts are provided by Asn119 and Arg150. Catalysis depends on His174, which acts as the Proton acceptor.

This sequence belongs to the LDH/MDH superfamily. MDH type 3 family. Homotetramer; arranged as a dimer of dimers.

The enzyme catalyses (S)-malate + NAD(+) = oxaloacetate + NADH + H(+). Catalyzes the reversible oxidation of malate to oxaloacetate. The sequence is that of Malate dehydrogenase from Chlorobaculum tepidum (strain ATCC 49652 / DSM 12025 / NBRC 103806 / TLS) (Chlorobium tepidum).